The following is a 158-amino-acid chain: UPF0102 protein GbCGDNIH1_0975 (158 aa).

It belongs to the UPF0102 family.

The chain is UPF0102 protein GbCGDNIH1_0975 from Granulibacter bethesdensis (strain ATCC BAA-1260 / CGDNIH1).